Consider the following 224-residue polypeptide: Zinc finger protein 22 (224 aa).

A disordered region spans residues 1 to 34; that stretch reads MRLAKPKAGISRSSSQGKAYENKRKTGRQRQKWG. Residues Lys18 and Lys23 each carry the N6-acetyllysine modification. Phosphoserine is present on Ser49. 5 consecutive C2H2-type zinc fingers follow at residues 55–77, 83–105, 111–133, 139–161, and 167–189; these read YKCTECEKSFSQSSTLFQHQKIH, HKCADCGKSFFQSSNLIQHRRIH, YKCDECGESFKQSSNLIQHQRIH, YQCDECGRCFSQSSHLIQHQRTH, and YQCSECGKCFSQSSHLRQHMKVH.

Belongs to the krueppel C2H2-type zinc-finger protein family. In terms of tissue distribution, in the embryo, expressed in developing craniofacial structures including dental epithelium of maxillary molar tooth organs, tongue epithelium and muscle, and craniofacial bone osteoblasts. In the adult, expressed in mesoderm-derived tissues such as skeletal muscle, heart, kidney and liver. Intermediate expression in spleen, thymus and brain. Low levels in endoderm-derived tissues such as intestine and colon.

It is found in the nucleus. Its function is as follows. Binds DNA through the consensus sequence 5'-CAATG-3'. May be involved in transcriptional regulation and may play a role in tooth formation. This Homo sapiens (Human) protein is Zinc finger protein 22 (ZNF22).